We begin with the raw amino-acid sequence, 341 residues long: L-threonine 3-dehydrogenase (341 aa).

Cys38 lines the Zn(2+) pocket. Catalysis depends on charge relay system residues Thr40 and His43. Zn(2+) contacts are provided by His63, Glu64, Cys93, Cys96, Cys99, and Cys107. Residues Ile175, Asp195, Arg200, 262-264, and 286-287 each bind NAD(+); these read LGI and IY.

The protein belongs to the zinc-containing alcohol dehydrogenase family. In terms of assembly, homotetramer. Requires Zn(2+) as cofactor.

The protein resides in the cytoplasm. It carries out the reaction L-threonine + NAD(+) = (2S)-2-amino-3-oxobutanoate + NADH + H(+). It functions in the pathway amino-acid degradation; L-threonine degradation via oxydo-reductase pathway; glycine from L-threonine: step 1/2. Functionally, catalyzes the NAD(+)-dependent oxidation of L-threonine to 2-amino-3-ketobutyrate. This chain is L-threonine 3-dehydrogenase, found in Klebsiella pneumoniae (strain 342).